Consider the following 129-residue polypeptide: Small ribosomal subunit protein uS12 (129 aa).

Residues 110–129 (RKQGRSRYGAHRKQVAATKK) are disordered.

The protein belongs to the universal ribosomal protein uS12 family. Part of the 30S ribosomal subunit. Contacts proteins S8 and S17. May interact with IF1 in the 30S initiation complex.

In terms of biological role, with S4 and S5 plays an important role in translational accuracy. Interacts with and stabilizes bases of the 16S rRNA that are involved in tRNA selection in the A site and with the mRNA backbone. Located at the interface of the 30S and 50S subunits, it traverses the body of the 30S subunit contacting proteins on the other side and probably holding the rRNA structure together. The combined cluster of proteins S8, S12 and S17 appears to hold together the shoulder and platform of the 30S subunit. The protein is Small ribosomal subunit protein uS12 of Rickettsia prowazekii (strain Madrid E).